The chain runs to 263 residues: Acyl-[acyl-carrier-protein]--UDP-N-acetylglucosamine O-acyltransferase (263 aa).

Belongs to the transferase hexapeptide repeat family. LpxA subfamily. Homotrimer.

Its subcellular location is the cytoplasm. The enzyme catalyses a (3R)-hydroxyacyl-[ACP] + UDP-N-acetyl-alpha-D-glucosamine = a UDP-3-O-[(3R)-3-hydroxyacyl]-N-acetyl-alpha-D-glucosamine + holo-[ACP]. It participates in glycolipid biosynthesis; lipid IV(A) biosynthesis; lipid IV(A) from (3R)-3-hydroxytetradecanoyl-[acyl-carrier-protein] and UDP-N-acetyl-alpha-D-glucosamine: step 1/6. In terms of biological role, involved in the biosynthesis of lipid A, a phosphorylated glycolipid that anchors the lipopolysaccharide to the outer membrane of the cell. The chain is Acyl-[acyl-carrier-protein]--UDP-N-acetylglucosamine O-acyltransferase from Xanthomonas euvesicatoria pv. vesicatoria (strain 85-10) (Xanthomonas campestris pv. vesicatoria).